Consider the following 592-residue polypeptide: Transducer of Cdc42-dependent actin assembly protein 1 homolog (592 aa).

An F-BAR domain is found at 3–267 (DSCSWDQLWD…DIGLIDPSRD (265 aa)). Disordered stretches follow at residues 343–366 (FGGGTADKKTDSGDYGTLPPQQRA) and 447–519 (SATS…DELY). Residues 359–436 (TLPPQQRARK…IQKFKILLDD (78 aa)) enclose the REM-1 domain. A coiled-coil region spans residues 363 to 441 (QQRARKIAGK…ILLDDVNAQL (79 aa)). Positions 447 to 457 (SATSVGGSDTP) are enriched in polar residues. Positions 459 to 474 (SIRSVSSASSGVTSRV) are enriched in low complexity. The span at 495–510 (FSGSNGGSDTDPTING) shows a compositional bias: polar residues. Residues 527 to 589 (PVLGEAIAQF…PSSYLKVTWF (63 aa)) enclose the SH3 domain.

Belongs to the FNBP1 family. As to quaternary structure, interacts (via SH3 domain) with wsp-1. Interacts with cdc-42 and (via SH3 domain) with wve-1. In terms of tissue distribution, expressed in the germline and specifically in the gonads.

It is found in the cell junction. It localises to the apical cell membrane. The protein localises to the basolateral cell membrane. Its subcellular location is the cytoplasmic vesicle. The protein resides in the cytoplasm. It is found in the perinuclear region. It localises to the recycling endosome. Functionally, plays a role in protein trafficking, actin organization and embryonic morphogenesis. Potentially acts as a cdc-42 effector. May play a role in hypodermal P-cell nuclear positioning. Together with toca-2, is required for protein trafficking regulating yolk protein clathrin-mediated endocytosis by oocytes during oogenesis and retrograde recycling and the sorting of recycling endosome cargo proteins such as mig-14. Also, together with toca-2, controls the distribution of actin at cell junctions. In Caenorhabditis elegans, this protein is Transducer of Cdc42-dependent actin assembly protein 1 homolog.